Here is a 689-residue protein sequence, read N- to C-terminus: Glycine--tRNA ligase beta subunit (689 aa).

It belongs to the class-II aminoacyl-tRNA synthetase family. In terms of assembly, tetramer of two alpha and two beta subunits.

It is found in the cytoplasm. It carries out the reaction tRNA(Gly) + glycine + ATP = glycyl-tRNA(Gly) + AMP + diphosphate. This chain is Glycine--tRNA ligase beta subunit, found in Salmonella agona (strain SL483).